We begin with the raw amino-acid sequence, 292 residues long: Bifunctional protein FolD (292 aa).

NADP(+) is bound by residues 161-163 (GRS) and Ile231.

The protein belongs to the tetrahydrofolate dehydrogenase/cyclohydrolase family. As to quaternary structure, homodimer.

It carries out the reaction (6R)-5,10-methylene-5,6,7,8-tetrahydrofolate + NADP(+) = (6R)-5,10-methenyltetrahydrofolate + NADPH. It catalyses the reaction (6R)-5,10-methenyltetrahydrofolate + H2O = (6R)-10-formyltetrahydrofolate + H(+). Its pathway is one-carbon metabolism; tetrahydrofolate interconversion. In terms of biological role, catalyzes the oxidation of 5,10-methylenetetrahydrofolate to 5,10-methenyltetrahydrofolate and then the hydrolysis of 5,10-methenyltetrahydrofolate to 10-formyltetrahydrofolate. This chain is Bifunctional protein FolD, found in Protochlamydia amoebophila (strain UWE25).